Consider the following 88-residue polypeptide: NADH-ubiquinone oxidoreductase chain 4L (88 aa).

Helical transmembrane passes span isoleucine 22 to valine 42 and isoleucine 57 to tyrosine 77.

Belongs to the complex I subunit 4L family.

Its subcellular location is the mitochondrion membrane. The catalysed reaction is a ubiquinone + NADH + 5 H(+)(in) = a ubiquinol + NAD(+) + 4 H(+)(out). Its function is as follows. Core subunit of the mitochondrial membrane respiratory chain NADH dehydrogenase (Complex I) that is believed to belong to the minimal assembly required for catalysis. Complex I functions in the transfer of electrons from NADH to the respiratory chain. The immediate electron acceptor for the enzyme is believed to be ubiquinone. The polypeptide is NADH-ubiquinone oxidoreductase chain 4L (ND4L) (Trimorphomyces papilionaceus (Jelly fungus)).